The following is a 503-amino-acid chain: Maturase K (503 aa).

It belongs to the intron maturase 2 family. MatK subfamily.

It localises to the plastid. It is found in the chloroplast. In terms of biological role, usually encoded in the trnK tRNA gene intron. Probably assists in splicing its own and other chloroplast group II introns. The sequence is that of Maturase K from Thryptomene saxicola (Rock thryptomene).